A 129-amino-acid chain; its full sequence is Small ribosomal subunit protein uS8 (129 aa).

Belongs to the universal ribosomal protein uS8 family. Part of the 30S ribosomal subunit.

Functionally, one of the primary rRNA binding proteins, it binds directly to 16S rRNA central domain where it helps coordinate assembly of the platform of the 30S subunit. The chain is Small ribosomal subunit protein uS8 from Picrophilus torridus (strain ATCC 700027 / DSM 9790 / JCM 10055 / NBRC 100828 / KAW 2/3).